Here is a 1315-residue protein sequence, read N- to C-terminus: ESX secretion system protein EccC (1315 aa).

Basic residues predominate over residues 1-11 (MSTVLVRRKER). The interval 1 to 21 (MSTVLVRRKERRQPPQMPRGE) is disordered. The Cytoplasmic segment spans residues 1–40 (MSTVLVRRKERRQPPQMPRGEILLESPPELPEVVTNSFQN). The helical transmembrane segment at 41–61 (VLMYLPMAAGSAAMVFTFLNH) threads the bilayer. The Extracellular portion of the chain corresponds to 62–64 (RNT). A helical transmembrane segment spans residues 65–85 (LQLVAGGMFALSMFGMMFGQL). Residues 86–1315 (SQQSGERKTK…RLIQTAYRES (1230 aa)) are Cytoplasmic-facing. 2 consecutive FtsK domains span residues 456 to 656 (GRPL…MESR) and 813 to 1004 (RDPY…YESE). 479 to 486 (GATGSGKS) is an ATP binding site. Glu-593 is an active-site residue. The tract at residues 721-1315 (RPQVVEQPQP…RLIQTAYRES (595 aa)) is binds EsxB. ATP is bound by residues 834-839 (QTGKST), Thr-1031, 1119-1124 (ECGKSN), Gln-1293, and 1310-1311 (TA). Residues 1099-1282 (LSPVYLDFNT…MSGNKDEGIL (184 aa)) enclose the FtsK 3 domain.

As to quaternary structure, the cytosolic domain can form homodimers. Binds EsxB, which leads to multimerization, however EsxA disassembles the multimers, possibly by making EccC-EsxA-EsxB trimers instead of EccC-EsxB-EsxB-EccC tetramers. Forms a complex with EsxA and EsxB, probably wholly mediated by EsxB.

It localises to the cell membrane. With respect to regulation, esxB binding to the third FtsK domain causes multimerization; a subsequent unknown step relieves the allosteric inhibition of linker 2 on FtsK domain 1, activating the ATPase activity; a mutant EsxB ('Ala-98') does not cause multimers to form. Its function is as follows. Part of the ESX specialized secretion system, which exports proteins from the cell including EsxA (ESAT-6) and EsxB (CFP-10). Has weak intrinsic ATPase activity; probably only the first FtsK domain can hydrolyze ATP. Might be the translocase subunit. This Thermomonospora curvata (strain ATCC 19995 / DSM 43183 / JCM 3096 / KCTC 9072 / NBRC 15933 / NCIMB 10081 / Henssen B9) protein is ESX secretion system protein EccC.